Consider the following 139-residue polypeptide: Nucleoside diphosphate kinase (139 aa).

Residues Lys-10, Phe-58, Arg-86, Thr-92, Arg-104, and Asn-114 each coordinate ATP. The Pros-phosphohistidine intermediate role is filled by His-117.

This sequence belongs to the NDK family. In terms of assembly, homotetramer. Requires Mg(2+) as cofactor.

The protein localises to the cytoplasm. The enzyme catalyses a 2'-deoxyribonucleoside 5'-diphosphate + ATP = a 2'-deoxyribonucleoside 5'-triphosphate + ADP. It carries out the reaction a ribonucleoside 5'-diphosphate + ATP = a ribonucleoside 5'-triphosphate + ADP. In terms of biological role, major role in the synthesis of nucleoside triphosphates other than ATP. The ATP gamma phosphate is transferred to the NDP beta phosphate via a ping-pong mechanism, using a phosphorylated active-site intermediate. The polypeptide is Nucleoside diphosphate kinase (Rhodococcus jostii (strain RHA1)).